We begin with the raw amino-acid sequence, 204 residues long: Protein OPG030 (204 aa).

The BACK domain maps to 95–177 (FLRQYINNNI…ITYSELTNAI (83 aa)).

It belongs to the orthopoxvirus OPG030 family.

This chain is Protein OPG030 (OPG30), found in Bos taurus (Bovine).